Reading from the N-terminus, the 243-residue chain is Probable phosphatase CBO3379/CLC_3322 (243 aa).

Zn(2+) contacts are provided by histidine 8, histidine 10, histidine 16, histidine 41, glutamate 74, histidine 102, histidine 132, aspartate 192, and histidine 194.

This sequence belongs to the PHP family. Requires Zn(2+) as cofactor.

This Clostridium botulinum (strain Hall / ATCC 3502 / NCTC 13319 / Type A) protein is Probable phosphatase CBO3379/CLC_3322.